The following is a 1375-amino-acid chain: Probable GMP synthase [glutamine-hydrolyzing] (1375 aa).

The Glutamine amidotransferase type-1; first part domain occupies 7–119 (QILVLDFGSQ…VLEIMESSQD (113 aa)). The active-site Nucleophile is the Cys-84. Residues 120–500 (SKDSSCFAFQ…NNATQGFKSC (381 aa)) are insert-1. N-acetyltransferase domains lie at 141–300 (LSFD…KALE) and 318–484 (VFLR…LEKK). The Glutamine amidotransferase type-1; second part domain occupies 501 to 580 (SLFKGIKQDS…AVGICGANTC (80 aa)). Residues His-554 and Glu-556 contribute to the active site. The tract at residues 597 to 1071 (IVYGGKAHCE…SGVANSLKIT (475 aa)) is insert-2. The N-acetyltransferase 3 domain occupies 612 to 765 (MQIQEAFKHI…ELIPLSIARE (154 aa)). The interval 1011-1036 (RIVDSQHTESSDIKGQSHLESSADSG) is disordered. Residues 1014–1027 (DSQHTESSDIKGQS) are compositionally biased toward basic and acidic residues. Residues 1055–1250 (YLEGNDRSGV…LGMPESMLMR (196 aa)) form the GMPS ATP-PPase domain. Residue 1083 to 1089 (SGGVDSS) coordinates ATP.

In terms of assembly, homodimer.

It carries out the reaction XMP + L-glutamine + ATP + H2O = GMP + L-glutamate + AMP + diphosphate + 2 H(+). Its pathway is purine metabolism; GMP biosynthesis; GMP from XMP (L-Gln route): step 1/1. Its function is as follows. Catalyzes the synthesis of GMP from XMP. The chain is Probable GMP synthase [glutamine-hydrolyzing] (guaA) from Helicobacter hepaticus (strain ATCC 51449 / 3B1).